The following is a 124-amino-acid chain: UPF0231 protein SO_3983 (124 aa).

The protein belongs to the UPF0231 family.

This chain is UPF0231 protein SO_3983, found in Shewanella oneidensis (strain ATCC 700550 / JCM 31522 / CIP 106686 / LMG 19005 / NCIMB 14063 / MR-1).